We begin with the raw amino-acid sequence, 293 residues long: Protease HtpX (293 aa).

Helical transmembrane passes span I4–L24 and G34–S54. A Zn(2+)-binding site is contributed by H139. The active site involves E140. H143 contributes to the Zn(2+) binding site. Helical transmembrane passes span V158–M178 and L193–I213. E222 is a binding site for Zn(2+).

This sequence belongs to the peptidase M48B family. The cofactor is Zn(2+).

The protein localises to the cell inner membrane. This chain is Protease HtpX, found in Escherichia fergusonii (strain ATCC 35469 / DSM 13698 / CCUG 18766 / IAM 14443 / JCM 21226 / LMG 7866 / NBRC 102419 / NCTC 12128 / CDC 0568-73).